A 377-amino-acid polypeptide reads, in one-letter code: tRNA/tmRNA (uracil-C(5))-methyltransferase (377 aa).

5 residues coordinate S-adenosyl-L-methionine: Gln199, Tyr227, Asn232, Glu248, and Asp308. The Nucleophile role is filled by Cys333. The active-site Proton acceptor is the Glu367.

Belongs to the class I-like SAM-binding methyltransferase superfamily. RNA M5U methyltransferase family. TrmA subfamily.

The catalysed reaction is uridine(54) in tRNA + S-adenosyl-L-methionine = 5-methyluridine(54) in tRNA + S-adenosyl-L-homocysteine + H(+). It carries out the reaction uridine(341) in tmRNA + S-adenosyl-L-methionine = 5-methyluridine(341) in tmRNA + S-adenosyl-L-homocysteine + H(+). Functionally, dual-specificity methyltransferase that catalyzes the formation of 5-methyluridine at position 54 (m5U54) in all tRNAs, and that of position 341 (m5U341) in tmRNA (transfer-mRNA). The polypeptide is tRNA/tmRNA (uracil-C(5))-methyltransferase (Aeromonas salmonicida (strain A449)).